Consider the following 573-residue polypeptide: Urease subunit alpha 2 (573 aa).

Residues 135 to 573 (GGMDTHVHYI…ISLNQLYFFS (439 aa)) form the Urease domain. His-140, His-142, and Lys-223 together coordinate Ni(2+). Lys-223 carries the post-translational modification N6-carboxylysine. His-225 serves as a coordination point for substrate. Ni(2+)-binding residues include His-252 and His-278. Residue His-326 is the Proton donor of the active site. A Ni(2+)-binding site is contributed by Asp-366.

The protein belongs to the metallo-dependent hydrolases superfamily. Urease alpha subunit family. Heterotrimer of UreA (gamma), UreB (beta) and UreC (alpha) subunits. Three heterotrimers associate to form the active enzyme. Requires Ni cation as cofactor. Carboxylation allows a single lysine to coordinate two nickel ions.

It localises to the cytoplasm. The catalysed reaction is urea + 2 H2O + H(+) = hydrogencarbonate + 2 NH4(+). The protein operates within nitrogen metabolism; urea degradation; CO(2) and NH(3) from urea (urease route): step 1/1. The polypeptide is Urease subunit alpha 2 (Brucella melitensis biotype 1 (strain ATCC 23456 / CCUG 17765 / NCTC 10094 / 16M)).